The following is a 372-amino-acid chain: Ligninase H2 (372 aa).

Residues 1–21 (MAFKQLLAALSVALTLQVTQA) form the signal peptide. Residues 22-28 (APNLDKR) constitute a propeptide that is removed on maturation. Intrachain disulfides connect Cys31-Cys44, Cys43-Cys314, Cys63-Cys149, and Cys278-Cys344. The active-site Proton acceptor is the His76. Positions 77, 95, 97, and 99 each coordinate Ca(2+). Position 205 (His205) interacts with heme b. Residues Ser206, Asp223, Thr225, Gln228, and Asp230 each contribute to the Ca(2+) site. An N-linked (GlcNAc...) asparagine glycan is attached at Asn286.

The protein belongs to the peroxidase family. Ligninase subfamily. Requires heme b as cofactor. It depends on Ca(2+) as a cofactor.

The catalysed reaction is 1-(3,4-dimethoxyphenyl)-2-(2-methoxyphenoxy)propane-1,3-diol + H2O2 = 3,4-dimethoxybenzaldehyde + guaiacol + glycolaldehyde + H2O. It carries out the reaction 2 (3,4-dimethoxyphenyl)methanol + H2O2 = 2 (3,4-dimethoxyphenyl)methanol radical + 2 H2O. It participates in secondary metabolite metabolism; lignin degradation. In terms of biological role, depolymerization of lignin. Catalyzes the C(alpha)-C(beta) cleavage of the propyl side chains of lignin. The protein is Ligninase H2 (GLG4) of Phanerodontia chrysosporium (White-rot fungus).